A 259-amino-acid polypeptide reads, in one-letter code: Mediator of RNA polymerase II transcription subunit 7 (259 aa).

Disordered stretches follow at residues 1–52, 99–118, and 223–242; these read MAEP…EWSP, TQLYPSSPKPDTKSGDSSQP, and GSTIQSTTKDKKGVKPEDQI. The segment covering 31 to 44 has biased composition (basic and acidic residues); that stretch reads ENIKKEASKGEDGR. Residues 230 to 242 show a composition bias toward basic and acidic residues; sequence TKDKKGVKPEDQI.

This sequence belongs to the Mediator complex subunit 7 family. In terms of assembly, component of the Mediator complex.

Its subcellular location is the nucleus. In terms of biological role, component of the Mediator complex, a coactivator involved in the regulated transcription of nearly all RNA polymerase II-dependent genes. Mediator functions as a bridge to convey information from gene-specific regulatory proteins to the basal RNA polymerase II transcription machinery. Mediator is recruited to promoters by direct interactions with regulatory proteins and serves as a scaffold for the assembly of a functional preinitiation complex with RNA polymerase II and the general transcription factors. The protein is Mediator of RNA polymerase II transcription subunit 7 (med7) of Emericella nidulans (strain FGSC A4 / ATCC 38163 / CBS 112.46 / NRRL 194 / M139) (Aspergillus nidulans).